The primary structure comprises 204 residues: Ribonuclease HII (204 aa).

In terms of domain architecture, RNase H type-2 spans 1–197 (MILGIDEAGR…KNRILNPKLL (197 aa)). A divalent metal cation-binding residues include aspartate 6, glutamate 7, and aspartate 103.

This sequence belongs to the RNase HII family. Mn(2+) serves as cofactor. Mg(2+) is required as a cofactor.

Its subcellular location is the cytoplasm. The catalysed reaction is Endonucleolytic cleavage to 5'-phosphomonoester.. Its function is as follows. Endonuclease that specifically degrades the RNA of RNA-DNA hybrids. In Helicobacter pylori (strain G27), this protein is Ribonuclease HII.